The chain runs to 88 residues: uncharacterized protein (88 aa).

2 consecutive transmembrane segments (helical) span residues Ile-8–Phe-28 and Glu-45–Leu-65.

The protein resides in the membrane. This is an uncharacterized protein from Saccharomyces cerevisiae (strain ATCC 204508 / S288c) (Baker's yeast).